A 159-amino-acid polypeptide reads, in one-letter code: Putative ribosomal RNA large subunit methyltransferase H (159 aa).

Residues leucine 76, glycine 108, and 127–132 (FSKMTF) contribute to the S-adenosyl-L-methionine site.

This sequence belongs to the RNA methyltransferase RlmH family.

It is found in the cytoplasm. It carries out the reaction pseudouridine(1915) in 23S rRNA + S-adenosyl-L-methionine = N(3)-methylpseudouridine(1915) in 23S rRNA + S-adenosyl-L-homocysteine + H(+). Its function is as follows. Specifically methylates the pseudouridine at position 1915 (m3Psi1915) in 23S rRNA. In Methanococcus maripaludis (strain DSM 14266 / JCM 13030 / NBRC 101832 / S2 / LL), this protein is Putative ribosomal RNA large subunit methyltransferase H.